The chain runs to 1068 residues: tRNA wybutosine-synthesizing protein 4 (1068 aa).

Positions 1–31 are disordered; sequence MCPPEQPAKAMAPSKSNQAAKSAVPTKEEKS. S-adenosyl-L-methionine contacts are provided by residues Arg-81, Gly-107, Asp-134, 181–182, and Glu-208; that span reads DL. Residues 876–1024 form the JmjC domain; that stretch reads ADFPSLSSDF…ALGRDVYGNR (149 aa).

It belongs to the methyltransferase superfamily. LCMT family.

It carries out the reaction 7-[(3S)-3-amino-3-carboxypropyl]wyosine(37) in tRNA(Phe) + S-adenosyl-L-methionine = 7-[(3S)-(3-amino-3-methoxycarbonyl)propyl]wyosine(37) in tRNA(Phe) + S-adenosyl-L-homocysteine. It catalyses the reaction 7-[(3S)-(3-amino-3-methoxycarbonyl)propyl]wyosine(37) in tRNA(Phe) + S-adenosyl-L-methionine + CO2 = wybutosine(37) in tRNA(Phe) + S-adenosyl-L-homocysteine + 2 H(+). The protein operates within tRNA modification; wybutosine-tRNA(Phe) biosynthesis. In terms of biological role, probable S-adenosyl-L-methionine-dependent methyltransferase that acts as a component of the wybutosine biosynthesis pathway. Wybutosine is a hyper modified guanosine with a tricyclic base found at the 3'-position adjacent to the anticodon of eukaryotic phenylalanine tRNA. May methylate the carboxyl group of leucine residues to form alpha-leucine ester residues. This is tRNA wybutosine-synthesizing protein 4 (ppm2) from Emericella nidulans (strain FGSC A4 / ATCC 38163 / CBS 112.46 / NRRL 194 / M139) (Aspergillus nidulans).